Here is a 208-residue protein sequence, read N- to C-terminus: Small ribosomal subunit protein uS4 (208 aa).

Residues 98–163 form the S4 RNA-binding domain; sequence QRLDNVVYRM…NPQITRAIEL (66 aa).

The protein belongs to the universal ribosomal protein uS4 family. In terms of assembly, part of the 30S ribosomal subunit. Contacts protein S5. The interaction surface between S4 and S5 is involved in control of translational fidelity.

Its function is as follows. One of the primary rRNA binding proteins, it binds directly to 16S rRNA where it nucleates assembly of the body of the 30S subunit. In terms of biological role, with S5 and S12 plays an important role in translational accuracy. This is Small ribosomal subunit protein uS4 from Campylobacter jejuni (strain RM1221).